The sequence spans 617 residues: Putative type VI secretion system protein VgrGB (617 aa).

The tract at residues 449 to 469 is disordered; it reads RTFHATNPSPYPLPASKTRTS.

The protein belongs to the VgrG protein family.

A Vgr protein that is probably part of a type VI secretion system (T6SS). May be required for export of proteins involved in Rhs-mediated cellular contact-dependent growth inhibition (CDI). The polypeptide is Putative type VI secretion system protein VgrGB (vgrGB) (Dickeya dadantii (strain 3937) (Erwinia chrysanthemi (strain 3937))).